The primary structure comprises 453 residues: Glutamyl-tRNA(Gln) amidotransferase subunit A (453 aa).

Active-site charge relay system residues include Lys-56 and Ser-131. Ser-155 acts as the Acyl-ester intermediate in catalysis.

This sequence belongs to the amidase family. GatA subfamily. In terms of assembly, heterotrimer of A, B and C subunits.

It catalyses the reaction L-glutamyl-tRNA(Gln) + L-glutamine + ATP + H2O = L-glutaminyl-tRNA(Gln) + L-glutamate + ADP + phosphate + H(+). Allows the formation of correctly charged Gln-tRNA(Gln) through the transamidation of misacylated Glu-tRNA(Gln) in organisms which lack glutaminyl-tRNA synthetase. The reaction takes place in the presence of glutamine and ATP through an activated gamma-phospho-Glu-tRNA(Gln). This chain is Glutamyl-tRNA(Gln) amidotransferase subunit A, found in Campylobacter jejuni subsp. doylei (strain ATCC BAA-1458 / RM4099 / 269.97).